Here is a 50-residue protein sequence, read N- to C-terminus: Fungus-induced protein 3 (50 aa).

This chain is Fungus-induced protein 3 (fip-3), found in Caenorhabditis elegans.